The chain runs to 310 residues: Acetylglutamate kinase (310 aa).

Residues 70–71 (GG), R92, and N191 each bind substrate.

Belongs to the acetylglutamate kinase family. ArgB subfamily.

Its subcellular location is the cytoplasm. The catalysed reaction is N-acetyl-L-glutamate + ATP = N-acetyl-L-glutamyl 5-phosphate + ADP. It functions in the pathway amino-acid biosynthesis; L-arginine biosynthesis; N(2)-acetyl-L-ornithine from L-glutamate: step 2/4. Catalyzes the ATP-dependent phosphorylation of N-acetyl-L-glutamate. In Corynebacterium diphtheriae (strain ATCC 700971 / NCTC 13129 / Biotype gravis), this protein is Acetylglutamate kinase.